The following is a 423-amino-acid chain: Glycine amidinotransferase, mitochondrial (423 aa).

The N-terminal 43 residues, M1–T43, are a transit peptide targeting the mitochondrion. Phosphoserine is present on residues S46 and S49. An arginine-binding site is contributed by D170. Catalysis depends on residues D254 and H303. The arginine site is built by D305, R322, S354, and S355. At K385 the chain carries N6-acetyllysine. The Amidino-cysteine intermediate role is filled by C407.

This sequence belongs to the amidinotransferase family. Homodimer. In terms of tissue distribution, highly expressed in the kidney and pancreas, especially in the proximal tubules of the kidney, and alpha cells of the pancreatic islets (at protein level). Moderately expressed in liver hepatocytes (at protein level). Expressed in the kidney, pancreas, liver, colon, ileum, jejunum, heart and skeletal muscle. In reproductive tissues, expressed in the testis, epididymis, ovary, oviduct and uterus. Expressed throughout the brain in neurons, astrocytes and oligodendrocytes. In 12.5 dpc embryos, it is expressed in the middle part of the somites, hepatic primordium and wall of the dorsal aorta. Expressed in 15.5 dpc embryos in isolated cells throughout the central nervous system, skeletal muscles, gonad primordia, caudal somites, liver and pancreas, but not in the choroid plexus, root ganglia or kidney. Expressed in skeletal muscle, kidney, pancreas, central nervous system, liver and intestine epithelial cells, but not in epidermis, dermis, olfactory epithelium, trachea, lung, stomach or heart in 18.5 dpc embryos.

The protein resides in the mitochondrion inner membrane. The enzyme catalyses L-arginine + glycine = guanidinoacetate + L-ornithine. It carries out the reaction 4-aminobutanoate + L-arginine = 4-guanidinobutanoate + L-ornithine. The catalysed reaction is beta-alanine + L-arginine = 3-guanidinopropanoate + L-ornithine. It catalyses the reaction taurine + L-arginine = taurocyamine + L-ornithine. Its pathway is amine and polyamine biosynthesis; creatine biosynthesis; creatine from L-arginine and glycine: step 1/2. In terms of biological role, transamidinase that catalyzes the transfer of the amidino group of L-arginine onto the amino moiety of acceptor metabolites such as glycine, beta-alanine, gamma-aminobutyric acid (GABA) and taurine yielding the corresponding guanidine derivatives. Catalyzes the rate-limiting step of creatine biosynthesis, namely the transfer of the amidino group from L-arginine to glycine to generate guanidinoacetate, which is then methylated by GAMT to form creatine. Provides creatine as a source for ATP generation in tissues with high energy demands, in particular skeletal muscle, heart and brain. The sequence is that of Glycine amidinotransferase, mitochondrial (Gatm) from Rattus norvegicus (Rat).